The sequence spans 443 residues: MKVLLIGGGAREHAIAMALKKNRSVELYTLMKNKNPGIYGLSKEVSFNNETDIDKIKEFAEKIRPELAIIGPEAPLGVGAADLLTEMGIPTVGPKKLPAQIETSKEFMRNLFKKYNIKGSLKYAAFNEYGENLEKFIDEMTGLGKDVVVKPAGLTGGKGVKVVGEQLKNNDDAKLYAKEVFEKSIGGGKIIVEEKLVGVEFTLHGFVDGENIVFMPAVQDHPHAYNNDEGPITGGMGSYSCSNHKLPFLPDDKLDEAKEIMKETVNAIKAEVGPYNGFLYGQFMLTKDGPKIIEYNARFGDPEAMNLLPILKTDFLDVCFGISNGNLDNINIEFENKATVCKYVVPNGYPICPVKNKEILVNSNEIEKAGAILFYASVNEENGKLVITGSRSAAVTGISERIEDAEKIAQDAIINFEGEIFFRSDIGTKKLIEKRIERMKELI.

The region spanning 109 to 324 is the ATP-grasp domain; sequence RNLFKKYNIK…FLDVCFGISN (216 aa). 140–202 lines the ATP pocket; that stretch reads MTGLGKDVVV…EEKLVGVEFT (63 aa). Glutamine 282, glutamate 294, and asparagine 296 together coordinate Mg(2+). Residues glutamine 282, glutamate 294, and asparagine 296 each contribute to the Mn(2+) site.

The protein belongs to the GARS family. Mg(2+) serves as cofactor. It depends on Mn(2+) as a cofactor.

It catalyses the reaction 5-phospho-beta-D-ribosylamine + glycine + ATP = N(1)-(5-phospho-beta-D-ribosyl)glycinamide + ADP + phosphate + H(+). The protein operates within purine metabolism; IMP biosynthesis via de novo pathway; N(1)-(5-phospho-D-ribosyl)glycinamide from 5-phospho-alpha-D-ribose 1-diphosphate: step 2/2. The chain is Phosphoribosylamine--glycine ligase from Methanococcus vannielii (strain ATCC 35089 / DSM 1224 / JCM 13029 / OCM 148 / SB).